A 349-amino-acid polypeptide reads, in one-letter code: Sensory histidine kinase/phosphatase NtrB (349 aa).

Residues 5–78 (IQPDAGQILN…SLAAGQGFTD (74 aa)) form the PAS domain. The 214-residue stretch at 136 to 349 (GLAHEIKNPL…EFSVYLPIRK (214 aa)) folds into the Histidine kinase domain. His139 is modified (phosphohistidine; by autocatalysis). Lys329 is a binding site for ATP.

Autophosphorylated.

The protein resides in the cytoplasm. It carries out the reaction ATP + protein L-histidine = ADP + protein N-phospho-L-histidine.. Functionally, member of the two-component regulatory system NtrB/NtrC, which controls expression of the nitrogen-regulated (ntr) genes in response to nitrogen limitation. Under conditions of nitrogen limitation, NtrB autophosphorylates and transfers the phosphoryl group to NtrC. In the presence of nitrogen, acts as a phosphatase that dephosphorylates and inactivates NtrC. This is Sensory histidine kinase/phosphatase NtrB (glnL) from Salmonella typhi.